The primary structure comprises 571 residues: Putative clathrin assembly protein At2g01600 (571 aa).

Positions 24 to 161 (RVNSEYADLD…ECFRVLKYDT (138 aa)) constitute an ENTH domain. Disordered regions lie at residues 325–346 (YRPD…REML) and 474–571 (PAPN…TGLI). Positions 337–346 (EPSHEEREML) are enriched in basic and acidic residues. The span at 508-522 (QQTYQHQPQPTYQHQ) shows a compositional bias: low complexity. Composition is skewed to polar residues over residues 523–532 (SNPPTNNSNP) and 543–571 (PVSQ…TGLI).

It localises to the membrane. It is found in the clathrin-coated pit. Its subcellular location is the golgi apparatus. The protein resides in the cytoplasmic vesicle. The protein localises to the clathrin-coated vesicle. This chain is Putative clathrin assembly protein At2g01600, found in Arabidopsis thaliana (Mouse-ear cress).